Here is a 123-residue protein sequence, read N- to C-terminus: Ribosome-binding factor A (123 aa).

It belongs to the RbfA family. As to quaternary structure, monomer. Binds 30S ribosomal subunits, but not 50S ribosomal subunits or 70S ribosomes.

Its subcellular location is the cytoplasm. Functionally, one of several proteins that assist in the late maturation steps of the functional core of the 30S ribosomal subunit. Associates with free 30S ribosomal subunits (but not with 30S subunits that are part of 70S ribosomes or polysomes). Required for efficient processing of 16S rRNA. May interact with the 5'-terminal helix region of 16S rRNA. The sequence is that of Ribosome-binding factor A from Geotalea daltonii (strain DSM 22248 / JCM 15807 / FRC-32) (Geobacter daltonii).